Consider the following 351-residue polypeptide: Ribosomal RNA large subunit methyltransferase M (351 aa).

Residues Ser186, Ala219–Gly222, Asp238, Asp258, and Asp274 each bind S-adenosyl-L-methionine. Catalysis depends on Lys303, which acts as the Proton acceptor.

The protein belongs to the class I-like SAM-binding methyltransferase superfamily. RNA methyltransferase RlmE family. RlmM subfamily. Monomer.

The protein resides in the cytoplasm. The catalysed reaction is cytidine(2498) in 23S rRNA + S-adenosyl-L-methionine = 2'-O-methylcytidine(2498) in 23S rRNA + S-adenosyl-L-homocysteine + H(+). In terms of biological role, catalyzes the 2'-O-methylation at nucleotide C2498 in 23S rRNA. This is Ribosomal RNA large subunit methyltransferase M from Xylella fastidiosa (strain M12).